A 604-amino-acid chain; its full sequence is FAD-linked oxidoreductase easE (604 aa).

Residues 1-25 form the signal peptide; it reads MQFLLWSTGLVALLSWLIYTQETQS. N-linked (GlcNAc...) asparagine glycans are attached at residues N47, N70, N106, and N196. One can recognise an FAD-binding PCMH-type domain in the interval 125–308; it reads QGRIPLFTVG…TRATMRVFPD (184 aa).

Belongs to the oxygen-dependent FAD-linked oxidoreductase family. Requires FAD as cofactor.

The protein operates within alkaloid biosynthesis; ergot alkaloid biosynthesis. FAD-linked oxidoreductase; part of the gene cluster that mediates the biosynthesis of fungal ergot alkaloid. DmaW catalyzes the first step of ergot alkaloid biosynthesis by condensing dimethylallyl diphosphate (DMAP) and tryptophan to form 4-dimethylallyl-L-tryptophan. The second step is catalyzed by the methyltransferase easF that methylates 4-dimethylallyl-L-tryptophan in the presence of S-adenosyl-L-methionine, resulting in the formation of 4-dimethylallyl-L-abrine. The catalase easC and the FAD-dependent oxidoreductase easE then transform 4-dimethylallyl-L-abrine to chanoclavine-I which is further oxidized by easD in the presence of NAD(+), resulting in the formation of chanoclavine-I aldehyde. Chanoclavine-I aldehyde is the precursor of ergoamides and ergopeptines in Clavicipitaceae, and clavine-type alcaloids such as fumiclavine in Trichocomaceae. However, the metabolites downstream of chanoclavine-I aldehyde in Arthrodermataceae have not been identified yet. In Trichophyton verrucosum (strain HKI 0517), this protein is FAD-linked oxidoreductase easE.